Reading from the N-terminus, the 234-residue chain is HTH-type transcriptional repressor FabR (234 aa).

The HTH tetR-type domain maps to 29 to 89 (KTRRSLVEAA…TMVDESGLML (61 aa)). The H-T-H motif DNA-binding region spans 52–71 (SLREVAREAGIAPTSFYRHF).

Homodimer.

The protein localises to the cytoplasm. Has been suggested to require either an unsaturated acyl carrier protein or unsaturated acyl-CoA (but not their saturated equivalents) for DNA-binding. Another group suggests that unsaturated thioesters are not essential but act instead to enhance DNA-binding. In terms of biological role, binds the promoter region of at least fabA and fabB, but probably not yqfA. Represses the transcription of fabA and fabB, involved in unsaturated fatty acid (UFA) biosynthesis. By controlling UFA production, FabR directly influences the physical properties of the membrane bilayer. The sequence is that of HTH-type transcriptional repressor FabR from Escherichia coli (strain K12).